The chain runs to 70 residues: Brevinin-1PLb (70 aa).

Positions 1-22 are cleaved as a signal peptide; it reads MFTTKKSMLLLFFLGTINLSLC. Residues 23–44 constitute a propeptide that is removed on maturation; the sequence is EEERNAEEERRDEPDEMNVEVE. A disulfide bond links C64 and C70.

As to expression, expressed by the skin glands.

It is found in the secreted. Antimicrobial activity against the Gram-negative bacterium E.coli, the Gram-positive bacterium S.aureus and the yeast C.albicans. The sequence is that of Brevinin-1PLb from Lithobates palustris (Pickerel frog).